A 158-amino-acid polypeptide reads, in one-letter code: Crossover junction endodeoxyribonuclease RuvC (158 aa).

Residues Asp-7, Glu-66, and Asp-139 contribute to the active site. Mg(2+) contacts are provided by Asp-7, Glu-66, and Asp-139.

The protein belongs to the RuvC family. As to quaternary structure, homodimer which binds Holliday junction (HJ) DNA. The HJ becomes 2-fold symmetrical on binding to RuvC with unstacked arms; it has a different conformation from HJ DNA in complex with RuvA. In the full resolvosome a probable DNA-RuvA(4)-RuvB(12)-RuvC(2) complex forms which resolves the HJ. It depends on Mg(2+) as a cofactor.

Its subcellular location is the cytoplasm. The catalysed reaction is Endonucleolytic cleavage at a junction such as a reciprocal single-stranded crossover between two homologous DNA duplexes (Holliday junction).. In terms of biological role, the RuvA-RuvB-RuvC complex processes Holliday junction (HJ) DNA during genetic recombination and DNA repair. Endonuclease that resolves HJ intermediates. Cleaves cruciform DNA by making single-stranded nicks across the HJ at symmetrical positions within the homologous arms, yielding a 5'-phosphate and a 3'-hydroxyl group; requires a central core of homology in the junction. The consensus cleavage sequence is 5'-(A/T)TT(C/G)-3'. Cleavage occurs on the 3'-side of the TT dinucleotide at the point of strand exchange. HJ branch migration catalyzed by RuvA-RuvB allows RuvC to scan DNA until it finds its consensus sequence, where it cleaves and resolves the cruciform DNA. In Nitratiruptor sp. (strain SB155-2), this protein is Crossover junction endodeoxyribonuclease RuvC.